Consider the following 103-residue polypeptide: Potassium voltage-gated channel subfamily E member 3 (103 aa).

Asparagine 5, asparagine 22, and asparagine 41 each carry an N-linked (GlcNAc...) asparagine glycan. The segment at 30 to 52 (LCRPGPGPGPDNQTEDRRASLPG) is disordered. Residues 57–77 (SYMYILFVMFLFAVTVGSLIL) form a helical membrane-spanning segment. Positions 68–79 (FAVTVGSLILGY) are interaction with KCNQ1. The Cytoplasmic portion of the chain corresponds to 78 to 103 (GYTRSRKVDKRSDPYHVYIKNRVSMI).

This sequence belongs to the potassium channel KCNE family. Interacts with KCNB1. Interacts with KCNC2. Associates with KCNC4/Kv3.4. Interacts with KCNQ1; associates with a KCNQ1:KCNE3 stoichiometry of 4:4; produces a current with nearly instantaneous activation with a linear current-voltage relationship and alters membrane raft localization; affects KCNQ1 structure and gating properties.

The protein localises to the cell membrane. It localises to the cytoplasm. Its subcellular location is the perikaryon. The protein resides in the cell projection. It is found in the dendrite. The protein localises to the membrane raft. Functionally, ancillary protein that functions as a regulatory subunit of the voltage-gated potassium (Kv) channel complex composed of pore-forming and potassium-conducting alpha subunits and of regulatory beta subunits. KCNE3 beta subunit modulates the gating kinetics and enhances stability of the channel complex. Alters the gating of the delayed rectifier Kv channel containing KCNB1 alpha subunit. Associates with KCNC4/Kv3.4 alpha subunit to form the subthreshold Kv channel in skeletal muscle and to establish the resting membrane potential (RMP) in muscle cells. Association with KCNQ1/KCLQT1 alpha subunit may form the intestinal cAMP-stimulated potassium channel involved in chloride secretion that produces a current with nearly instantaneous activation with a linear current-voltage relationship. The polypeptide is Potassium voltage-gated channel subfamily E member 3 (Mus musculus (Mouse)).